A 35-amino-acid chain; its full sequence is Alpha-amanitin proprotein (35 aa).

Positions 1-10 are excised as a propeptide; that stretch reads MSDINATRLP. The residue at position 11 (isoleucine 11) is a (3R,4R)-4,5-dihydroxyisoleucine; in form alpha-amanitin. Isoleucine 11 bears the (3R,4S)-4-hydroxyisoleucine; in form gamma-amanitin mark. The cyclopeptide (Ile-Pro) cross-link spans 11-18; sequence IWGIGCNP. Positions 12-16 form a cross-link, 2'-cysteinyl-6'-hydroxytryptophan sulfoxide (Trp-Cys); that stretch reads WGIGC. Proline 18 is subject to 4-hydroxyproline. Positions 19–35 are excised as a propeptide; the sequence is CVGDDVTTLLTRGEALC.

It belongs to the MSDIN fungal toxin family. Post-translationally, processed by the macrocyclase-peptidase enzyme POPB to yield a toxic cyclic decapeptide. POPB first removes 10 residues from the N-terminus. Conformational trapping of the remaining peptide forces the enzyme to release this intermediate rather than proceed to macrocyclization. The enzyme rebinds the remaining peptide in a different conformation and catalyzes macrocyclization of the N-terminal 8 residues.

Functionally, major toxin belonging to the bicyclic octapeptides amatoxins that acts by binding non-competitively to RNA polymerase II and greatly slowing the elongation of transcripts from target promoters. The sequence is that of Alpha-amanitin proprotein from Amanita bisporigera (Destroying angel).